Here is a 333-residue protein sequence, read N- to C-terminus: tRNA uridine(34) hydroxylase (333 aa).

The Rhodanese domain occupies 123-217 (SDPEVVLVDT…YLEEVNKAES (95 aa)). C177 serves as the catalytic Cysteine persulfide intermediate. The segment covering 313–327 (QKKEALRKQSAEKNK) has biased composition (basic and acidic residues). Residues 313-333 (QKKEALRKQSAEKNKAKQANA) are disordered.

Belongs to the TrhO family.

It catalyses the reaction uridine(34) in tRNA + AH2 + O2 = 5-hydroxyuridine(34) in tRNA + A + H2O. Functionally, catalyzes oxygen-dependent 5-hydroxyuridine (ho5U) modification at position 34 in tRNAs. The chain is tRNA uridine(34) hydroxylase from Shewanella oneidensis (strain ATCC 700550 / JCM 31522 / CIP 106686 / LMG 19005 / NCIMB 14063 / MR-1).